We begin with the raw amino-acid sequence, 115 residues long: Large ribosomal subunit protein bL21 (115 aa).

This sequence belongs to the bacterial ribosomal protein bL21 family. Part of the 50S ribosomal subunit. Contacts protein L20.

In terms of biological role, this protein binds to 23S rRNA in the presence of protein L20. In Picosynechococcus sp. (strain ATCC 27264 / PCC 7002 / PR-6) (Agmenellum quadruplicatum), this protein is Large ribosomal subunit protein bL21.